We begin with the raw amino-acid sequence, 157 residues long: Transcription elongation factor GreA (157 aa).

This sequence belongs to the GreA/GreB family.

In terms of biological role, necessary for efficient RNA polymerase transcription elongation past template-encoded arresting sites. The arresting sites in DNA have the property of trapping a certain fraction of elongating RNA polymerases that pass through, resulting in locked ternary complexes. Cleavage of the nascent transcript by cleavage factors such as GreA or GreB allows the resumption of elongation from the new 3'terminus. GreA releases sequences of 2 to 3 nucleotides. The sequence is that of Transcription elongation factor GreA from Maricaulis maris (strain MCS10) (Caulobacter maris).